We begin with the raw amino-acid sequence, 734 residues long: Photosystem I P700 chlorophyll a apoprotein A2 (734 aa).

A run of 8 helical transmembrane segments spans residues 46 to 69 (IFAS…FHVA), 135 to 158 (LYNG…LHLQ), 175 to 199 (LNHH…HVAI), 273 to 291 (IAHH…GHMY), 330 to 353 (IHFQ…QHMY), 369 to 395 (AALY…IFFI), 417 to 439 (AIIS…LYVH), and 517 to 535 (FLVH…LILV). Residues cysteine 559 and cysteine 568 each contribute to the [4Fe-4S] cluster site. 2 consecutive transmembrane segments (helical) span residues 575–596 (AFYL…YWHW) and 643–665 (LSVW…MFLI). Histidine 654, methionine 662, and tyrosine 670 together coordinate chlorophyll a. Position 671 (tryptophan 671) interacts with phylloquinone. A helical membrane pass occupies residues 707 to 727 (LVGLAHFSVGYIFTYAAFLIA).

It belongs to the PsaA/PsaB family. As to quaternary structure, the PsaA/B heterodimer binds the P700 chlorophyll special pair and subsequent electron acceptors. PSI consists of a core antenna complex that captures photons, and an electron transfer chain that converts photonic excitation into a charge separation. The eukaryotic PSI reaction center is composed of at least 11 subunits. Requires P700 is a chlorophyll a/chlorophyll a' dimer, A0 is one or more chlorophyll a, A1 is one or both phylloquinones and FX is a shared 4Fe-4S iron-sulfur center. as cofactor.

Its subcellular location is the plastid. It localises to the chloroplast thylakoid membrane. The catalysed reaction is reduced [plastocyanin] + hnu + oxidized [2Fe-2S]-[ferredoxin] = oxidized [plastocyanin] + reduced [2Fe-2S]-[ferredoxin]. Functionally, psaA and PsaB bind P700, the primary electron donor of photosystem I (PSI), as well as the electron acceptors A0, A1 and FX. PSI is a plastocyanin-ferredoxin oxidoreductase, converting photonic excitation into a charge separation, which transfers an electron from the donor P700 chlorophyll pair to the spectroscopically characterized acceptors A0, A1, FX, FA and FB in turn. Oxidized P700 is reduced on the lumenal side of the thylakoid membrane by plastocyanin. This is Photosystem I P700 chlorophyll a apoprotein A2 from Morus indica (Mulberry).